The following is a 307-amino-acid chain: Follistatin-related protein 1 (307 aa).

An N-terminal signal peptide occupies residues 1-19 (MMWRRWLALALVAVAWVHA). The Follistatin-like domain occupies 29-52 (ICANVFCGAGRECAVTEKGEPTCL). Disulfide bonds link C30/C41, C35/C51, C53/C83, C57/C76, and C65/C97. The 53-residue stretch at 47 to 99 (GEPTCLCIEQCKPHKRPVCGSNGKTYLNHCELHRDACLTGSKIQVDYDGHCKE) folds into the Kazal-like domain. An N-linked (GlcNAc...) asparagine glycan is attached at N143. The region spanning 143-177 (NYSEILDKYFKNFDNGDSRLDSSEFLKFVEQNETA) is the EF-hand 1 domain. The residue at position 164 (S164) is a Phosphoserine. N-linked (GlcNAc...) asparagine glycosylation is found at N174 and N179. Residues 192 to 227 (LRGLCVDALIELSDENADWKLSFQEFLKCLNPSFNP) enclose the EF-hand 2 domain. The VWFC domain occupies 232–286 (CALEDETYADGAETEVDCNRCVCACGNWVCTAMTCDGKNQKGAQTQAEEEMTRYV).

As to quaternary structure, homodimer. Interacts with SCN10A. Interacts with DIP2A; DIP2A may act as a cell surface receptor for FSTL1. Interacts with BMP4. Interacts with CD14; this interaction promotes TL4-mediated signaling cascade.

It is found in the secreted. In terms of biological role, secreted glycoprotein that is involved in various physiological processes, such as angiogenesis, regulation of the immune response, cell proliferation and differentiation. Plays a role in the development of the central nervous system, skeletal system, lungs, and ureter. Promotes endothelial cell survival, migration and differentiation into network structures in an AKT-dependent manner. Also promotes survival of cardiac myocytes. Initiates various signaling cascades by activating different receptors on the cell surface such as DIP2A, TLR4 or BMP receptors. In Bos taurus (Bovine), this protein is Follistatin-related protein 1 (FSTL1).